A 271-amino-acid chain; its full sequence is Putative carboxymethylenebutenolidase (271 aa).

Residues Cys-147, Asp-204, and His-236 contribute to the active site.

The protein belongs to the dienelactone hydrolase family.

The catalysed reaction is 2-(5-oxo-2,5-dihydrofuran-2-ylidene)acetate + H2O = 4-oxohex-2-enedioate + H(+). The sequence is that of Putative carboxymethylenebutenolidase (ysgA) from Escherichia coli (strain K12).